Consider the following 56-residue polypeptide: Large ribosomal subunit protein eL40 (56 aa).

Belongs to the eukaryotic ribosomal protein eL40 family.

The polypeptide is Large ribosomal subunit protein eL40 (Sulfurisphaera tokodaii (strain DSM 16993 / JCM 10545 / NBRC 100140 / 7) (Sulfolobus tokodaii)).